Consider the following 88-residue polypeptide: Small ribosomal subunit protein uS17 (88 aa).

It belongs to the universal ribosomal protein uS17 family. As to quaternary structure, part of the 30S ribosomal subunit.

One of the primary rRNA binding proteins, it binds specifically to the 5'-end of 16S ribosomal RNA. The sequence is that of Small ribosomal subunit protein uS17 from Hahella chejuensis (strain KCTC 2396).